The sequence spans 658 residues: DNA ligase (658 aa).

Residues 31–35 (DFEYD), 80–81 (SL), and glutamate 110 contribute to the NAD(+) site. Catalysis depends on lysine 112, which acts as the N6-AMP-lysine intermediate. NAD(+) contacts are provided by arginine 133, glutamate 167, lysine 279, and lysine 303. Zn(2+) is bound by residues cysteine 397, cysteine 400, cysteine 415, and cysteine 420. The BRCT domain maps to 584-654 (DTASIYFQKS…KALNIPIINE (71 aa)).

The protein belongs to the NAD-dependent DNA ligase family. LigA subfamily. It depends on Mg(2+) as a cofactor. Mn(2+) serves as cofactor.

It carries out the reaction NAD(+) + (deoxyribonucleotide)n-3'-hydroxyl + 5'-phospho-(deoxyribonucleotide)m = (deoxyribonucleotide)n+m + AMP + beta-nicotinamide D-nucleotide.. Functionally, DNA ligase that catalyzes the formation of phosphodiester linkages between 5'-phosphoryl and 3'-hydroxyl groups in double-stranded DNA using NAD as a coenzyme and as the energy source for the reaction. It is essential for DNA replication and repair of damaged DNA. The polypeptide is DNA ligase (Mycoplasma pneumoniae (strain ATCC 29342 / M129 / Subtype 1) (Mycoplasmoides pneumoniae)).